The chain runs to 1835 residues: AT-rich interactive domain-containing protein 2 (1835 aa).

Position 2 is an N-acetylalanine (Ala-2). Ser-4 bears the Phosphoserine mark. Residues Lys-7, Lys-15, and Lys-119 each participate in a glycyl lysine isopeptide (Lys-Gly) (interchain with G-Cter in SUMO2) cross-link. One can recognise an ARID domain in the interval 13–105 (RRKGLAFLDE…YLEKYEKVHH (93 aa)). Residues 313 to 317 (LRFLL) carry the LXXLL motif. The segment at residues 524–603 (ACQWLNAHFE…IHVVGVKRRA (80 aa)) is a DNA-binding region (RFX-type winged-helix). Residue Lys-555 forms a Glycyl lysine isopeptide (Lys-Gly) (interchain with G-Cter in SUMO2) linkage. Phosphoserine occurs at positions 631 and 635. At Thr-653 the chain carries Phosphothreonine. Position 689 is a phosphoserine (Ser-689). The residue at position 692 (Thr-692) is a Phosphothreonine. 5 disordered regions span residues 819 to 844 (QQLI…QSQD), 962 to 1057 (LTGQ…SGES), 1266 to 1287 (MENP…KENE), 1295 to 1314 (NGRK…KIQS), and 1321 to 1341 (LISN…KQNS). Low complexity-rich tracts occupy residues 823–843 (TTSP…SQSQ), 985–996 (PTAMSSSSTPQS), and 1025–1044 (QVQV…QPQQ). A Phosphoserine modification is found at Ser-1300. Over residues 1301–1314 (DSSLPPSNSGKIQS) the composition is skewed to polar residues. Ser-1391 and Ser-1496 each carry phosphoserine. Disordered regions lie at residues 1488 to 1522 (DSGS…AEDT) and 1572 to 1629 (SAVQ…RKPG). Polar residues predominate over residues 1491 to 1509 (SKVSHSPALSSDVRSTNGT). The span at 1513–1522 (KTVKRPAEDT) shows a compositional bias: basic and acidic residues. Residues 1573–1592 (AVQQKQQHPPTYVQNVVPQN) are compositionally biased toward polar residues. A compositionally biased stretch (low complexity) spans 1602–1623 (QVQGQPNSSQPSPFSGSSQPGD). The C2H2-type zinc-finger motif lies at 1632–1657 (FMCLWQSCKKWFQTPSQVFYHAATEH). Residues Lys-1701, Lys-1716, and Lys-1731 each participate in a glycyl lysine isopeptide (Lys-Gly) (interchain with G-Cter in SUMO2) cross-link. The segment at 1703-1728 (DEPGQAGSQKSSTKQPTVGGTSSTPR) is disordered. Residues 1708 to 1728 (AGSQKSSTKQPTVGGTSSTPR) are compositionally biased toward polar residues.

As to quaternary structure, component of the SWI/SNF-B (PBAF) chromatin remodeling complex, at least composed of SMARCA4/BRG1, SMARCB1/BAF47/SNF5, ACTL6A/BAF53A or ACTL6B/BAF53B, SMARCE1/BAF57, SMARCD1/BAF60A, SMARCD2/BAF60B, perhaps SMARCD3/BAF60C, SMARCC1/BAF155, SMARCC2/BAF170, PBRM1/BAF180, ARID2/BAF200 and actin. Interacts with SRF. Forms complexes with SRF and SRF cofactors MYOCD, NKX2-5 and SRFBP1. As to expression, highly expressed in heart.

The protein resides in the nucleus. Involved in transcriptional activation and repression of select genes by chromatin remodeling (alteration of DNA-nucleosome topology). Required for the stability of the SWI/SNF chromatin remodeling complex SWI/SNF-B (PBAF). May be involved in targeting the complex to different genes. May be involved in regulating transcriptional activation of cardiac genes. This is AT-rich interactive domain-containing protein 2 from Homo sapiens (Human).